A 315-amino-acid chain; its full sequence is Olfactory receptor 3A1 (315 aa).

The Extracellular segment spans residues 1–28; the sequence is MQPESGANGTVIAEFILLGLLEAPGLQP. Residue N8 is glycosylated (N-linked (GlcNAc...) asparagine). A helical membrane pass occupies residues 29–52; the sequence is VVFVLFLFAYLVTVGGNLSILAAV. Over 53–60 the chain is Cytoplasmic; the sequence is LVEPKLHS. The helical transmembrane segment at 61 to 82 threads the bilayer; the sequence is PMYFFLGNLSVLDVGCISVTVP. Over 83–103 the chain is Extracellular; it reads SMLSRLLSRKRAVPCGACLTQ. A disulfide bridge links C100 with C192. A helical membrane pass occupies residues 104 to 123; that stretch reads LFFFHLFVGVDCFLLTAMAY. The Cytoplasmic portion of the chain corresponds to 124 to 143; it reads DRFLAICRPLTYSTRMSQTV. The chain crosses the membrane as a helical span at residues 144–161; sequence QRMLVAASWACAFTNALT. The Extracellular portion of the chain corresponds to 162–199; sequence HTVAMSTLNFCGPNEVNHFYCDLPQLFQLSCSSTQLNE. Residues 200–223 traverse the membrane as a helical segment; the sequence is LLLFAVGFIMAGTPMALIVISYIH. Residues 224–240 are Cytoplasmic-facing; it reads VAAAVLRIRSVEGRKKA. A helical membrane pass occupies residues 241–264; that stretch reads FSTCGSHLTVVAMFYGSGIFNYMR. The Extracellular portion of the chain corresponds to 265-275; the sequence is LGSTKLSDKDK. Residues 276 to 295 form a helical membrane-spanning segment; that stretch reads AVGIFNTVINPMVNPIIYRF. Residues 296–315 are Cytoplasmic-facing; the sequence is RNPEVQSAIWRMLTGRRSLA.

This sequence belongs to the G-protein coupled receptor 1 family.

It localises to the cell membrane. In terms of biological role, odorant receptor. The polypeptide is Olfactory receptor 3A1 (OR3A1) (Pan troglodytes (Chimpanzee)).